The following is a 108-amino-acid chain: Ig kappa chain V region 120 (108 aa).

Residues 1–23 (AFELTQTPSSVEAAVGGTVTIKC) form a framework-1 region. Positions 24-34 (QSSQSIGTYLA) are complementarity-determining-1. Positions 35 to 49 (WYZZKPGQPPKLLIY) are framework-2. The tract at residues 50–56 (RASTLAS) is complementarity-determining-2. The tract at residues 57-88 (GVSSRFKGSGSGTEFTLTISGVECADAATYYC) is framework-3. The segment at 89-97 (QGTYYZSAS) is complementarity-determining-3. Positions 98-107 (FGGGTEVVVK) are framework-4.

In Oryctolagus cuniculus (Rabbit), this protein is Ig kappa chain V region 120.